Consider the following 833-residue polypeptide: G-type lectin S-receptor-like serine/threonine-protein kinase RKS1 (833 aa).

The first 18 residues, 1-18, serve as a signal peptide directing secretion; sequence MKVVFVIFFFFLFQFCIS. The Bulb-type lectin domain maps to 19 to 144; it reads VDTIMRRQSL…VTGRSFWESF (126 aa). At 19–440 the chain is on the extracellular side; sequence VDTIMRRQSL…NGLSGKRRVL (422 aa). Residues Asn-79, Asn-92, Asn-100, Asn-109, Asn-228, and Asn-256 are each glycosylated (N-linked (GlcNAc...) asparagine). The region spanning 280 to 330 is the EGF-like domain; it reads PKEQCDNYAHCGPNGYCDSPSSKTFECTCLPGFEPKFPRHWFLRDSSGGCT. Cystine bridges form between Cys-284–Cys-296, Cys-290–Cys-306, and Cys-308–Cys-329. Residues 338-421 enclose the PAN domain; the sequence is CSEKDGFVKL…SGQDFYIRVD (84 aa). 2 N-linked (GlcNAc...) asparagine glycosylation sites follow: Asn-363 and Asn-376. Disulfide bonds link Cys-369–Cys-396 and Cys-373–Cys-379. Residues 441 to 461 form a helical membrane-spanning segment; that stretch reads LILISLIAAVMLLTVILFCVV. At 462–833 the chain is on the cytoplasmic side; sequence RERRKSNRHR…DVTFSDIQGR (372 aa). The Protein kinase domain maps to 515 to 800; that stretch reads FSSQNKLGAG…NLPNPKHPAF (286 aa). ATP contacts are provided by residues 521 to 529 and Lys-543; that span reads LGAGGFGPV. Phosphoserine occurs at positions 549 and 564. Residues 604–621 form a caM-binding region; that stretch reads EQRAELDWPKRMEIVRGI. Asp-640 acts as the Proton acceptor in catalysis. A phosphoserine mark is found at Ser-644 and Ser-657. A Phosphothreonine modification is found at Thr-674. 2 positions are modified to phosphoserine: Ser-717 and Ser-821.

Belongs to the protein kinase superfamily. Ser/Thr protein kinase family.

It is found in the cell membrane. It catalyses the reaction L-seryl-[protein] + ATP = O-phospho-L-seryl-[protein] + ADP + H(+). The catalysed reaction is L-threonyl-[protein] + ATP = O-phospho-L-threonyl-[protein] + ADP + H(+). In Arabidopsis thaliana (Mouse-ear cress), this protein is G-type lectin S-receptor-like serine/threonine-protein kinase RKS1 (RKS1).